Reading from the N-terminus, the 442-residue chain is MTPKEQSPTTLLISSRKDPAGSLIHEELYSFLEDDKRAHSHIRHWHAEERLIYLDGPSLPHDADRILFLSRHASERPRPVLTVHVTGNFGSADYGGRPNTLTPAATGLMHALINRLIIHAPEGYEVMYEATHHGPTDIPLPSCFIELGSTEKEWNDRIAARAVAQAVLDALLMDTSSVIPLAGFGGTHYAQRQTEITKLTRGGFGHIMPTRDIPHLTDALFQDIISSTGAFAIYIDGKSMSGKEERMITGLADKHTIPILGQGDLMRLFDLPFSEYMSIRNLAESLIPGSSIVLHTILEMPAPVSLTIPGELVDEVMKVAAEEFISALDSFPIVHMTGRGKACHPVFITDAAFSGRISDELIHLCVTLLQDRYTCSFEGDSLIIKKLRFDPKKAKNLGIPSGPLYSELMAGKPVEVGDSVIYPEMVMTETEKRIHIPQRQAR.

The protein belongs to the DtdA deacylase family. In terms of assembly, monomer. The cofactor is Zn(2+).

The enzyme catalyses a D-aminoacyl-tRNA + H2O = a tRNA + a D-alpha-amino acid + H(+). It carries out the reaction glycyl-tRNA(Ala) + H2O = tRNA(Ala) + glycine + H(+). In terms of biological role, D-aminoacyl-tRNA deacylase with broad substrate specificity. By recycling D-aminoacyl-tRNA to D-amino acids and free tRNA molecules, this enzyme counteracts the toxicity associated with the formation of D-aminoacyl-tRNA entities in vivo. The chain is D-aminoacyl-tRNA deacylase from Methanospirillum hungatei JF-1 (strain ATCC 27890 / DSM 864 / NBRC 100397 / JF-1).